Consider the following 529-residue polypeptide: VIN3-like protein 3 (529 aa).

The short motif at 97 to 104 (PKRQKRDL) is the Nuclear localization signal element. A PHD-type zinc finger spans residues 137–207 (RCSCCICFKY…CFNCVSCGKT (71 aa)). The Nuclear localization signal motif lies at 214–221 (LKKQLIIA). The Fibronectin type-III domain maps to 312 to 411 (GSMKIRIESV…FIVSTKTLQD (100 aa)). Residues 421 to 529 (MSNCNNANKM…AGVSLILLQD (109 aa)) form a VIN3-Interacting Domain (VID) region.

In terms of assembly, interacts with VIN3.

The protein resides in the nucleus. In terms of biological role, involved in both the vernalization and photoperiod pathways by regulating gene expression. The sequence is that of VIN3-like protein 3 (VIL3) from Arabidopsis thaliana (Mouse-ear cress).